Reading from the N-terminus, the 643-residue chain is Probable extracellular metalloproteinase 4 (643 aa).

Residues 1–18 (MHGLLLAGLLALPLNVLA) form the signal peptide. Positions 19–254 (HPTESHSSGV…VHSVVDYVSA (236 aa)) are excised as a propeptide. The segment covering 47 to 57 (TKSDAVPKQDG) has biased composition (basic and acidic residues). The segment at 47–69 (TKSDAVPKQDGESFTTSSTGDDN) is disordered. Polar residues predominate over residues 58–69 (ESFTTSSTGDDN). N-linked (GlcNAc...) asparagine glycosylation is found at asparagine 271 and asparagine 420. Zn(2+) is bound at residue histidine 437. The active site involves glutamate 438. A Zn(2+)-binding site is contributed by histidine 441. Asparagine 603 and asparagine 629 each carry an N-linked (GlcNAc...) asparagine glycan.

Belongs to the peptidase M36 family. Zn(2+) serves as cofactor.

The protein resides in the secreted. Secreted metalloproteinase probably acting as a virulence factor. The sequence is that of Probable extracellular metalloproteinase 4 (MEP4) from Arthroderma benhamiae (strain ATCC MYA-4681 / CBS 112371) (Trichophyton mentagrophytes).